The chain runs to 2208 residues: RNA-directed RNA polymerase L (2208 aa).

An endonuclease region spans residues 26–284 (KDALLSQVHP…LHQDSDTINC (259 aa)). Residues Glu-51, Asp-89, and Glu-102 each coordinate Mn(2+). Lys-115 is an active-site residue. The RdRp catalytic domain occupies 1171-1367 (CDMKMAVNNG…YLSSKLNKFV (197 aa)). Mg(2+) is bound at residue Asp-1329.

Belongs to the Bunyavirales RNA polymerase family. Homomultimer; the oligomeric structure is essential for the polymerase activity. Interacts with nucleoprotein N. Interacts with protein Z; this interaction inhibits viral transcription and replication, Z partially blocks the product exit tunnel for the releasing nascent RNA product. Mn(2+) serves as cofactor. Mg(2+) is required as a cofactor.

The protein localises to the virion. The protein resides in the host cytoplasm. The enzyme catalyses RNA(n) + a ribonucleoside 5'-triphosphate = RNA(n+1) + diphosphate. Its function is as follows. RNA-dependent RNA polymerase, which is responsible for the replication and transcription of the viral RNA genome using antigenomic RNA as an intermediate. During transcription, synthesizes subgenomic RNAs and assures their capping by a cap-snatching mechanism, which involves the endonuclease activity cleaving the host capped pre-mRNAs. These short capped RNAs are then used as primers for viral transcription. The 3'-end of subgenomic mRNAs molecules are heterogeneous and not polyadenylated. The replicase function is to direct synthesis of antigenomic and genomic RNA which are encapsidated and non capped. As a consequence of the use of the same enzyme for both transcription and replication, these mechanisms need to be well coordinated. These processes may be regulated by proteins N and Z in a dose-dependent manner. Z protein inhibits the viral polymerase L und thus the viral transcription and RNA synthesis. This is RNA-directed RNA polymerase L from Homo sapiens (Human).